The sequence spans 277 residues: MAIRLYRAYTPGTRNRSVLGFEELVRIKPRKKLTSGQHSGKGRNNRGIITSRHRGGGHKRLYRRMDFRRNKIDVPGRIDSIEYDPNRNTYICLVNYEDGEKRYILHPRGIKIGDMIVSGSEAPISRGNALPLSKMPLGTTIHNVEITPGKGGQLARAAGAVAKLIAKEGRLATLRSPSGEVRLISQDCLATVGQIGNADINNKNFGKAGSKRWLGKRPKVRGVVMNPVDHPHGGGEGRAPIGREKPLTPWGYTAFGRRSRKIRKYSNIFILRRRRRN.

Residues 30 to 60 (RKKLTSGQHSGKGRNNRGIITSRHRGGGHKR) are disordered. Residues 51–60 (SRHRGGGHKR) show a composition bias toward basic residues.

It belongs to the universal ribosomal protein uL2 family. As to quaternary structure, part of the 50S ribosomal subunit.

Its subcellular location is the plastid. It localises to the chloroplast. The sequence is that of Large ribosomal subunit protein uL2c (rpl2) from Angiopteris evecta (Mule's foot fern).